Here is a 318-residue protein sequence, read N- to C-terminus: Ethyl acetate hydrolase (318 aa).

Active-site residues include Ser-165, Asp-261, and His-291.

The protein belongs to the 'GDXG' lipolytic enzyme family. In terms of assembly, monomer.

Its subcellular location is the cytoplasm. It carries out the reaction ethyl acetate + H2O = ethanol + acetate + H(+). Its activity is regulated as follows. Inhibited by the serine protease inhibitor phenylmethylsulfonyl fluoride, the histidine reagent diethylpyrocarbonate and two sulfhydryl reagents, mercuric chloride and naphthol AS-D chloroacetate. Not inhibited by EDTA. Its function is as follows. Esterase that catalyzes the hydrolysis of ethyl acetate. Can also use propyl acetate and the chromogenic substrates alpha-naphthyl acetate, alpha-naphthyl propionate, alpha-naphthyl caproate and 4-nitrophenyl acetate, with a preference for short-chain aliphatic esters. Highest activity is obtained in vitro with propyl acetate, followed by ethyl acetate. In vivo, could be involved in pyoverdine biosynthesis, but its specific role and its in vivo substrate have not been identified. This Pseudomonas putida (Arthrobacter siderocapsulatus) protein is Ethyl acetate hydrolase.